We begin with the raw amino-acid sequence, 130 residues long: Small ribosomal subunit protein uS9 (130 aa).

This sequence belongs to the universal ribosomal protein uS9 family.

This is Small ribosomal subunit protein uS9 from Yersinia pseudotuberculosis serotype O:1b (strain IP 31758).